Consider the following 248-residue polypeptide: NAD(P)H-quinone oxidoreductase subunit K (248 aa).

Positions 66, 67, 131, and 162 each coordinate [4Fe-4S] cluster.

This sequence belongs to the complex I 20 kDa subunit family. In terms of assembly, NDH-1 can be composed of about 15 different subunits; different subcomplexes with different compositions have been identified which probably have different functions. It depends on [4Fe-4S] cluster as a cofactor.

It is found in the cellular thylakoid membrane. The catalysed reaction is a plastoquinone + NADH + (n+1) H(+)(in) = a plastoquinol + NAD(+) + n H(+)(out). The enzyme catalyses a plastoquinone + NADPH + (n+1) H(+)(in) = a plastoquinol + NADP(+) + n H(+)(out). In terms of biological role, NDH-1 shuttles electrons from an unknown electron donor, via FMN and iron-sulfur (Fe-S) centers, to quinones in the respiratory and/or the photosynthetic chain. The immediate electron acceptor for the enzyme in this species is believed to be plastoquinone. Couples the redox reaction to proton translocation, and thus conserves the redox energy in a proton gradient. Cyanobacterial NDH-1 also plays a role in inorganic carbon-concentration. This Synechococcus sp. (strain WH7803) protein is NAD(P)H-quinone oxidoreductase subunit K.